A 420-amino-acid chain; its full sequence is Zinc finger and BTB domain-containing protein 42 (420 aa).

The BTB domain maps to 24–92 (CDCTVLVGDA…MYEGRLDLHS (69 aa)). Disordered regions lie at residues 174–204 (PPSWQVSEESSGALDLSLKPGPRPEQAHPPC) and 216–248 (QGAQPLVKAEQDSFSEQDSSSPQSADRSPPPVC). Residues 227–241 (DSFSEQDSSSPQSAD) are compositionally biased toward low complexity. 4 C2H2-type zinc fingers span residues 292–314 (CICPLCCKLFPSTHALQPHLSAH), 332–354 (PTCPLCSKTFSCTYTLKRHERTH), 360–382 (YTCVQCGKSFQYSHNLSRHAVVH), and 388–411 (HACRWCERRFTQSGDLYRHVRKFH).

Belongs to the krueppel C2H2-type zinc-finger protein family. ZBTB18 subfamily.

The protein resides in the cytoplasm. It is found in the nucleus. Its subcellular location is the nucleoplasm. In terms of biological role, transcriptional repressor. Specifically binds DNA and probably acts by recruiting chromatin remodeling multiprotein complexes. The polypeptide is Zinc finger and BTB domain-containing protein 42 (Zbtb42) (Rattus norvegicus (Rat)).